A 549-amino-acid chain; its full sequence is Glucose-6-phosphate isomerase (549 aa).

Residue Glu353 is the Proton donor of the active site. Active-site residues include His384 and Lys513.

It belongs to the GPI family.

The protein resides in the cytoplasm. The catalysed reaction is alpha-D-glucose 6-phosphate = beta-D-fructose 6-phosphate. The protein operates within carbohydrate biosynthesis; gluconeogenesis. It functions in the pathway carbohydrate degradation; glycolysis; D-glyceraldehyde 3-phosphate and glycerone phosphate from D-glucose: step 2/4. Catalyzes the reversible isomerization of glucose-6-phosphate to fructose-6-phosphate. This chain is Glucose-6-phosphate isomerase, found in Brucella melitensis biotype 2 (strain ATCC 23457).